The primary structure comprises 419 residues: MTTQLEQAWEIAKQRYAAVGVDVEEALRQLDRLPVSMHCWQGDDVAGFENPAGSLTGGIQATGNYPGKARNAEELRADLEQALSLIPGPKRLNLHAIYLESDAPVARNEIKPEHFKNWVTWAKANKLGLDFNPSCFSHPLSADGFTLSHANDEIRQFWIDHCKASRRVSAYFGEQLGTPSVMNIWVPDGMKDITVDRFAPRQRLLNALDEVISEKLDPAHHIDAVESKLFGIGAESYTVGSNEFYMGYATSRQTALCLDAGHFHPTEVISDKISAAMLYIPRLLLHVSRPVRWDSDHVVLLDDETQAIASEIIRHNLFDRVHIGLDFFDASINRIAAWVIGTRNMKKALLRALLEPTAQLRQLENDGDYTARLALLEEQKSLPWQAIWEMYCQRHDTPAGSQWLDSVRAYENAVLSQRG.

The Mn(2+) site is built by His-262, Asp-294, and Asp-296.

This sequence belongs to the rhamnose isomerase family. As to quaternary structure, homotetramer. It depends on Mn(2+) as a cofactor.

It localises to the cytoplasm. It catalyses the reaction L-rhamnopyranose = L-rhamnulose. It participates in carbohydrate degradation; L-rhamnose degradation; glycerone phosphate from L-rhamnose: step 1/3. Its function is as follows. Catalyzes the interconversion of L-rhamnose and L-rhamnulose. The chain is L-rhamnose isomerase from Klebsiella pneumoniae subsp. pneumoniae (strain ATCC 700721 / MGH 78578).